Consider the following 950-residue polypeptide: Voltage-gated inwardly rectifying potassium channel KCNH6 (950 aa).

Over methionine 1 to tryptophan 261 the chain is Cytoplasmic. Positions isoleucine 41–threonine 70 constitute a PAS domain. The 53-residue stretch at cysteine 92–leucine 144 folds into the PAC domain. Residues leucine 154–lysine 174 are disordered. Residues leucine 262–leucine 282 form a helical membrane-spanning segment. Residues serine 283 to serine 298 lie on the Extracellular side of the membrane. The helical transmembrane segment at proline 299–phenylalanine 319 threads the bilayer. Residues arginine 320–histidine 340 lie on the Cytoplasmic side of the membrane. Residues tyrosine 341–phenylalanine 361 traverse the membrane as a helical segment. Over arginine 362 to threonine 370 the chain is Extracellular. A helical; Voltage-sensor transmembrane segment spans residues leucine 371–aspartate 391. At arginine 392–alanine 398 the chain is on the cytoplasmic side. The chain crosses the membrane as a helical span at residues alanine 399 to tryptophan 419. Residues tyrosine 420 to tyrosine 463 lie on the Extracellular side of the membrane. Residues valine 464–proline 484 constitute an intramembrane region (pore-forming). Positions serine 476–asparagine 481 match the Selectivity filter motif. The Extracellular segment spans residues asparagine 485–lysine 490. Residues valine 491–valine 511 form a helical membrane-spanning segment. The Cytoplasmic portion of the chain corresponds to serine 512–serine 950. The tract at residues alanine 594–leucine 694 is cNMP-binding domain. Disordered regions lie at residues glycine 719–leucine 750 and valine 890–serine 950. The span at asparagine 740–leucine 750 shows a compositional bias: polar residues. Low complexity predominate over residues proline 898 to leucine 912.

The protein belongs to the potassium channel family. H (Eag) (TC 1.A.1.20) subfamily. Kv11.2/KCNH6 sub-subfamily. The potassium channel is probably composed of a homo- or heterotetrameric complex of pore-forming alpha subunits that can associate only within their subfamily. Highly expressed in celiac and superior mesenteric ganglia, but not detected in brain or in heart. Detected at low levels in retina. Also found in pituitary. Also found in the olfactory bulb (granular and mitral cell layers).

Its subcellular location is the cell membrane. The catalysed reaction is K(+)(in) = K(+)(out). Its function is as follows. Pore-forming (alpha) subunit of voltage-gated inwardly rectifying potassium channel. Characterized by unusual gating kinetics by producing relatively small outward currents during membrane depolarization and large inward currents during subsequent repolarization which reflect a rapid inactivation during depolarization and quick recovery from inactivation but slow deactivation (closing) during repolarization. Activates even more slowly than KCNH2. The polypeptide is Voltage-gated inwardly rectifying potassium channel KCNH6 (Rattus norvegicus (Rat)).